The following is a 92-amino-acid chain: MQVNEYFDGNVTSIAFENGEGRATSGVMLVGDYEFGTSEKELMKIVSGKLEAKLPGEPGFRAYPAGSEFRIDANQKFQVRVIEPTAYLCFYS.

This sequence belongs to the nucleoside phosphorylase PpnP family.

It catalyses the reaction a purine D-ribonucleoside + phosphate = a purine nucleobase + alpha-D-ribose 1-phosphate. It carries out the reaction adenosine + phosphate = alpha-D-ribose 1-phosphate + adenine. The enzyme catalyses cytidine + phosphate = cytosine + alpha-D-ribose 1-phosphate. The catalysed reaction is guanosine + phosphate = alpha-D-ribose 1-phosphate + guanine. It catalyses the reaction inosine + phosphate = alpha-D-ribose 1-phosphate + hypoxanthine. It carries out the reaction thymidine + phosphate = 2-deoxy-alpha-D-ribose 1-phosphate + thymine. The enzyme catalyses uridine + phosphate = alpha-D-ribose 1-phosphate + uracil. The catalysed reaction is xanthosine + phosphate = alpha-D-ribose 1-phosphate + xanthine. Catalyzes the phosphorolysis of diverse nucleosides, yielding D-ribose 1-phosphate and the respective free bases. Can use uridine, adenosine, guanosine, cytidine, thymidine, inosine and xanthosine as substrates. Also catalyzes the reverse reactions. The chain is Pyrimidine/purine nucleoside phosphorylase from Rhodopirellula baltica (strain DSM 10527 / NCIMB 13988 / SH1).